Consider the following 25-residue polypeptide: Caerin-1.4 (25 aa).

Leu-25 carries the leucine amide modification.

It belongs to the frog skin active peptide (FSAP) family. Caerin subfamily. Expressed by the skin parotoid and/or rostral glands.

The protein resides in the secreted. Antibacterial peptide, that adopts an alpha helical conformation which can disrupt bacterial membranes. Each caerin displays a different antimicrobial specificity. In Ranoidea caerulea (Green tree frog), this protein is Caerin-1.4.